A 146-amino-acid chain; its full sequence is Prolactin-inducible protein homolog (146 aa).

Positions 1 to 28 (MRALQFLLRVSPAFLLLVLCLQLEINKA) are cleaved as a signal peptide. Cystine bridges form between Cys-65-Cys-91 and Cys-89-Cys-123. Asn-105 carries an N-linked (GlcNAc...) asparagine glycan.

The protein belongs to the PIP family. Monomer. Interacts with AZGP1.

It is found in the secreted. The chain is Prolactin-inducible protein homolog (PIP) from Oryctolagus cuniculus (Rabbit).